Consider the following 601-residue polypeptide: Glutathione-regulated potassium-efflux system protein KefB (601 aa).

The next 13 helical transmembrane spans lie at Ser-4–Ala-24, Ile-29–Phe-49, Glu-55–Leu-75, Ile-87–Met-107, Ala-115–Met-135, Val-152–Gly-172, His-177–Gly-197, Phe-207–Gly-227, Leu-230–Leu-250, Gly-268–Tyr-288, Leu-291–Leu-311, Phe-326–Ser-346, and Ala-356–Ile-376. The 120-residue stretch at Lys-400 to Thr-519 folds into the RCK N-terminal domain.

This sequence belongs to the monovalent cation:proton antiporter 2 (CPA2) transporter (TC 2.A.37) family. KefB subfamily. Interacts with the regulatory subunit KefG.

The protein localises to the cell inner membrane. Its function is as follows. Pore-forming subunit of a potassium efflux system that confers protection against electrophiles. Catalyzes K(+)/H(+) antiport. This is Glutathione-regulated potassium-efflux system protein KefB from Klebsiella pneumoniae (strain 342).